Here is a 65-residue protein sequence, read N- to C-terminus: MEYALHEVLEVQEMTAFKTLCLTKSKTMKALVSDPKLKEIMQQDVDITTRQLQEFASILSNAKQE.

This is an uncharacterized protein from Bacillus subtilis (strain 168).